A 452-amino-acid polypeptide reads, in one-letter code: Chromosomal replication initiator protein DnaA (452 aa).

A domain I, interacts with DnaA modulators region spans residues M1–Q80. The tract at residues Q80–S114 is domain II. Residues Y115–A332 form a domain III, AAA+ region region. G160, G162, K163, and T164 together coordinate ATP. Residues E333–V452 are domain IV, binds dsDNA.

Belongs to the DnaA family. Oligomerizes as a right-handed, spiral filament on DNA at oriC.

The protein localises to the cytoplasm. In terms of biological role, plays an essential role in the initiation and regulation of chromosomal replication. ATP-DnaA binds to the origin of replication (oriC) to initiate formation of the DNA replication initiation complex once per cell cycle. Binds the DnaA box (a 9 base pair repeat at the origin) and separates the double-stranded (ds)DNA. Forms a right-handed helical filament on oriC DNA; dsDNA binds to the exterior of the filament while single-stranded (ss)DNA is stabiized in the filament's interior. The ATP-DnaA-oriC complex binds and stabilizes one strand of the AT-rich DNA unwinding element (DUE), permitting loading of DNA polymerase. After initiation quickly degrades to an ADP-DnaA complex that is not apt for DNA replication. Binds acidic phospholipids. This Histophilus somni (strain 129Pt) (Haemophilus somnus) protein is Chromosomal replication initiator protein DnaA.